We begin with the raw amino-acid sequence, 210 residues long: Large ribosomal subunit protein uL4 (210 aa).

This sequence belongs to the universal ribosomal protein uL4 family. As to quaternary structure, part of the 50S ribosomal subunit.

One of the primary rRNA binding proteins, this protein initially binds near the 5'-end of the 23S rRNA. It is important during the early stages of 50S assembly. It makes multiple contacts with different domains of the 23S rRNA in the assembled 50S subunit and ribosome. Functionally, forms part of the polypeptide exit tunnel. This Orientia tsutsugamushi (strain Boryong) (Rickettsia tsutsugamushi) protein is Large ribosomal subunit protein uL4.